Reading from the N-terminus, the 168-residue chain is Lipid transfer protein EARLI 1 (168 aa).

The N-terminal stretch at 1-25 (MASKNSASIALFFALNIIFFTLTAA) is a signal peptide. Positions 32–81 (PSPKHKPVPSPKPKPVPSPKPKPVPSPSVPSPSVPSPNPRPVTPPRTPGS) are disordered. One copy of the A-1 repeat lies at 34-41 (PKHKPVPS). Residues 34 to 57 (PKHKPVPSPKPKPVPSPKPKPVPS) are 3 X 8 AA repeats A of P-K-[HP]-K-P-V-P-S. Pro residues predominate over residues 39–78 (VPSPKPKPVPSPKPKPVPSPSVPSPSVPSPNPRPVTPPRT). The stretch at 42–49 (PKPKPVPS) is one A-2 repeat. The stretch at 50–57 (PKPKPVPS) is one A-3 repeat. The B-1 repeat unit spans residues 58–62 (PSVPS). Residues 58–67 (PSVPSPSVPS) form a 2 X 58 AA tandem repeats B of P-S-V-P-S region. The B-2 repeat unit spans residues 63–67 (PSVPS).

This sequence belongs to the plant LTP family. PEARLI1 subfamily. As to expression, mostly expressed in aerial part of seedlings, and, to a lower extent, in roots. Higher basal levels in early-flowering ecotypes.

The protein localises to the secreted. The protein resides in the cell wall. Probable lipid transfer protein (LTP). May improve freezing survival. Seems to control the flowering process and lignin synthesis. Has an auxiliary role for germinability and early seedling development under low temperature and salt stress conditions, probably in an abscisic acid- (ABA) dependent manner. Confers resistance to Botrytis cinerea and exhibits anti-fungal activity, at least against S.cerevisiae, B.cinerea and Fusarium oxysporum, probably by increasing their membrane permeability. In Arabidopsis thaliana (Mouse-ear cress), this protein is Lipid transfer protein EARLI 1 (EARLI1).